Here is a 156-residue protein sequence, read N- to C-terminus: Bacterial microcompartment shell protein PduK (156 aa).

The BMC domain maps to 4–89; sequence SLGLLEVSGL…PGDGILSHSV (86 aa). Positions 81–119 are disordered; the sequence is GDGILSHSVTPESESEPAPAPTPVVPHEEIPEDHAAPEA. Basic and acidic residues predominate over residues 106–116; sequence PHEEIPEDHAA.

Belongs to the bacterial microcompartments protein family. In terms of assembly, interacts with shell protein PduA and assembly protein PduM. Interacts with PduP, probably with its first 18 residues. Requires Fe cation as cofactor.

It is found in the bacterial microcompartment. It functions in the pathway polyol metabolism; 1,2-propanediol degradation. A minor shell protein of the bacterial microcompartment (BMC) dedicated to 1,2-propanediol (1,2-PD) degradation. Its function is as follows. Expression of a cosmid containing the full 21-gene pdu operon in E.coli allows E.coli to grow on 1,2-propanediol (1,2-PD) with the appearance of bacterial microcompartments (BMC) in its cytoplasm. Overexpression of this protein leads to the appearance of a single large aggregate complex in the cytoplasm. Functionally, the 1,2-PD-specific bacterial microcompartment (BMC) concentrates low levels of 1,2-PD catabolic enzymes, concentrates volatile reaction intermediates thus enhancing pathway flux and keeps the level of toxic, mutagenic propionaldehyde low. The chain is Bacterial microcompartment shell protein PduK from Citrobacter freundii.